The sequence spans 599 residues: Serine/threonine-protein kinase Nek1 (599 aa).

Positions 4–258 constitute a Protein kinase domain; sequence YEVLEQIGKG…AAELLKHPHL (255 aa). ATP-binding positions include 10 to 18 and Lys33; that span reads IGKGAFGSA. Asp129 functions as the Proton acceptor in the catalytic mechanism. Disordered regions lie at residues 364-386, 461-482, and 504-542; these read SIVK…EPPK, SEDP…PQHC, and DDDD…DTSS. Positions 511–530 are enriched in low complexity; sequence DSSSGRNNAAAAASSRAGSS.

The protein belongs to the protein kinase superfamily. NEK Ser/Thr protein kinase family. NIMA subfamily. Expressed in anthers, pistils and leaves.

The enzyme catalyses L-seryl-[protein] + ATP = O-phospho-L-seryl-[protein] + ADP + H(+). It carries out the reaction L-threonyl-[protein] + ATP = O-phospho-L-threonyl-[protein] + ADP + H(+). May be involved in plant development processes. In Oryza sativa subsp. japonica (Rice), this protein is Serine/threonine-protein kinase Nek1.